We begin with the raw amino-acid sequence, 223 residues long: Probable chemoreceptor glutamine deamidase CheD (223 aa).

The interval 189–223 (QTASAKAHTPPQIERFSAPAKPRFERFTRPSTATS) is disordered.

This sequence belongs to the CheD family.

It catalyses the reaction L-glutaminyl-[protein] + H2O = L-glutamyl-[protein] + NH4(+). Probably deamidates glutamine residues to glutamate on methyl-accepting chemotaxis receptors (MCPs), playing an important role in chemotaxis. This chain is Probable chemoreceptor glutamine deamidase CheD, found in Bordetella petrii (strain ATCC BAA-461 / DSM 12804 / CCUG 43448).